A 254-amino-acid polypeptide reads, in one-letter code: Triosephosphate isomerase (254 aa).

10–12 (NWK) serves as a coordination point for substrate. His-99 functions as the Electrophile in the catalytic mechanism. Catalysis depends on Glu-169, which acts as the Proton acceptor. Residues Gly-175, Ser-215, and 236 to 237 (GG) contribute to the substrate site.

Belongs to the triosephosphate isomerase family. As to quaternary structure, homodimer.

The protein resides in the cytoplasm. The enzyme catalyses D-glyceraldehyde 3-phosphate = dihydroxyacetone phosphate. The protein operates within carbohydrate biosynthesis; gluconeogenesis. Its pathway is carbohydrate degradation; glycolysis; D-glyceraldehyde 3-phosphate from glycerone phosphate: step 1/1. Functionally, involved in the gluconeogenesis. Catalyzes stereospecifically the conversion of dihydroxyacetone phosphate (DHAP) to D-glyceraldehyde-3-phosphate (G3P). This chain is Triosephosphate isomerase, found in Chlamydia felis (strain Fe/C-56) (Chlamydophila felis).